The primary structure comprises 235 residues: Adenosine 5'-phosphosulfate reductase (235 aa).

Positions 121, 122, 204, and 207 each coordinate [4Fe-4S] cluster. The active-site Nucleophile; cysteine thiosulfonate intermediate is the C230.

This sequence belongs to the PAPS reductase family. CysH subfamily. [4Fe-4S] cluster serves as cofactor.

It is found in the cytoplasm. The enzyme catalyses [thioredoxin]-disulfide + sulfite + AMP + 2 H(+) = adenosine 5'-phosphosulfate + [thioredoxin]-dithiol. It functions in the pathway sulfur metabolism; hydrogen sulfide biosynthesis; sulfite from sulfate. Catalyzes the formation of sulfite from adenosine 5'-phosphosulfate (APS) using thioredoxin as an electron donor. This chain is Adenosine 5'-phosphosulfate reductase, found in Geobacillus kaustophilus (strain HTA426).